Reading from the N-terminus, the 686-residue chain is Translation initiation factor IF-2 (686 aa).

A disordered region spans residues 54–105 (KPSVADEFEVEEKVVRSKKNSNKKKKKGKGNEDKRQENFAGRQQTQTVETPD). Residues 69-81 (RSKKNSNKKKKKG) show a composition bias toward basic residues. The 170-residue stretch at 188–357 (ERPAVVTIMG…LLVSEVEEYK (170 aa)) folds into the tr-type G domain. A G1 region spans residues 197–204 (GHVDHGKT). 197–204 (GHVDHGKT) provides a ligand contact to GTP. A G2 region spans residues 222–226 (GITQH). The interval 243-246 (DTPG) is G3. Residues 243–247 (DTPGH) and 297–300 (NKMD) each bind GTP. The segment at 297–300 (NKMD) is G4. The tract at residues 333–335 (SAI) is G5.

The protein belongs to the TRAFAC class translation factor GTPase superfamily. Classic translation factor GTPase family. IF-2 subfamily.

The protein localises to the cytoplasm. In terms of biological role, one of the essential components for the initiation of protein synthesis. Protects formylmethionyl-tRNA from spontaneous hydrolysis and promotes its binding to the 30S ribosomal subunits. Also involved in the hydrolysis of GTP during the formation of the 70S ribosomal complex. The sequence is that of Translation initiation factor IF-2 from Bacillus cereus (strain AH187).